The sequence spans 101 residues: Small ribosomal subunit protein uS14 (101 aa).

It belongs to the universal ribosomal protein uS14 family. As to quaternary structure, part of the 30S ribosomal subunit. Contacts proteins S3 and S10.

In terms of biological role, binds 16S rRNA, required for the assembly of 30S particles and may also be responsible for determining the conformation of the 16S rRNA at the A site. This chain is Small ribosomal subunit protein uS14, found in Alkalilimnicola ehrlichii (strain ATCC BAA-1101 / DSM 17681 / MLHE-1).